We begin with the raw amino-acid sequence, 157 residues long: Small ribosomal subunit protein uS7 (157 aa).

This sequence belongs to the universal ribosomal protein uS7 family. As to quaternary structure, part of the 30S ribosomal subunit. Contacts proteins S9 and S11.

One of the primary rRNA binding proteins, it binds directly to 16S rRNA where it nucleates assembly of the head domain of the 30S subunit. Is located at the subunit interface close to the decoding center, probably blocks exit of the E-site tRNA. This Phenylobacterium zucineum (strain HLK1) protein is Small ribosomal subunit protein uS7.